Consider the following 319-residue polypeptide: 4-hydroxy-3-methylbut-2-enyl diphosphate reductase (319 aa).

Cys-17 provides a ligand contact to [4Fe-4S] cluster. 2 residues coordinate (2E)-4-hydroxy-3-methylbut-2-enyl diphosphate: His-46 and His-79. Positions 46 and 79 each coordinate dimethylallyl diphosphate. His-46 and His-79 together coordinate isopentenyl diphosphate. Cys-101 lines the [4Fe-4S] cluster pocket. Residue His-129 participates in (2E)-4-hydroxy-3-methylbut-2-enyl diphosphate binding. His-129 provides a ligand contact to dimethylallyl diphosphate. Position 129 (His-129) interacts with isopentenyl diphosphate. The active-site Proton donor is Glu-131. Thr-170 contacts (2E)-4-hydroxy-3-methylbut-2-enyl diphosphate. Position 200 (Cys-200) interacts with [4Fe-4S] cluster. Positions 228, 229, 230, and 273 each coordinate (2E)-4-hydroxy-3-methylbut-2-enyl diphosphate. Ser-228, Ser-229, Asn-230, and Ser-273 together coordinate dimethylallyl diphosphate. 4 residues coordinate isopentenyl diphosphate: Ser-228, Ser-229, Asn-230, and Ser-273.

It belongs to the IspH family. Requires [4Fe-4S] cluster as cofactor.

The catalysed reaction is isopentenyl diphosphate + 2 oxidized [2Fe-2S]-[ferredoxin] + H2O = (2E)-4-hydroxy-3-methylbut-2-enyl diphosphate + 2 reduced [2Fe-2S]-[ferredoxin] + 2 H(+). It catalyses the reaction dimethylallyl diphosphate + 2 oxidized [2Fe-2S]-[ferredoxin] + H2O = (2E)-4-hydroxy-3-methylbut-2-enyl diphosphate + 2 reduced [2Fe-2S]-[ferredoxin] + 2 H(+). Its pathway is isoprenoid biosynthesis; dimethylallyl diphosphate biosynthesis; dimethylallyl diphosphate from (2E)-4-hydroxy-3-methylbutenyl diphosphate: step 1/1. It participates in isoprenoid biosynthesis; isopentenyl diphosphate biosynthesis via DXP pathway; isopentenyl diphosphate from 1-deoxy-D-xylulose 5-phosphate: step 6/6. Functionally, catalyzes the conversion of 1-hydroxy-2-methyl-2-(E)-butenyl 4-diphosphate (HMBPP) into a mixture of isopentenyl diphosphate (IPP) and dimethylallyl diphosphate (DMAPP). Acts in the terminal step of the DOXP/MEP pathway for isoprenoid precursor biosynthesis. The polypeptide is 4-hydroxy-3-methylbut-2-enyl diphosphate reductase (Cereibacter sphaeroides (strain ATCC 17029 / ATH 2.4.9) (Rhodobacter sphaeroides)).